Here is a 229-residue protein sequence, read N- to C-terminus: NAD(P)H-quinone oxidoreductase subunit K, chloroplastic (229 aa).

Residues cysteine 43, cysteine 44, cysteine 108, and cysteine 139 each coordinate [4Fe-4S] cluster.

This sequence belongs to the complex I 20 kDa subunit family. In terms of assembly, NDH is composed of at least 16 different subunits, 5 of which are encoded in the nucleus. The cofactor is [4Fe-4S] cluster.

Its subcellular location is the plastid. The protein localises to the chloroplast thylakoid membrane. The enzyme catalyses a plastoquinone + NADH + (n+1) H(+)(in) = a plastoquinol + NAD(+) + n H(+)(out). It catalyses the reaction a plastoquinone + NADPH + (n+1) H(+)(in) = a plastoquinol + NADP(+) + n H(+)(out). Functionally, NDH shuttles electrons from NAD(P)H:plastoquinone, via FMN and iron-sulfur (Fe-S) centers, to quinones in the photosynthetic chain and possibly in a chloroplast respiratory chain. The immediate electron acceptor for the enzyme in this species is believed to be plastoquinone. Couples the redox reaction to proton translocation, and thus conserves the redox energy in a proton gradient. In Coffea arabica (Arabian coffee), this protein is NAD(P)H-quinone oxidoreductase subunit K, chloroplastic.